Here is an 89-residue protein sequence, read N- to C-terminus: Putative regulatory protein PCC8801_0196 (89 aa).

This sequence belongs to the RemA family.

The protein is Putative regulatory protein PCC8801_0196 of Rippkaea orientalis (strain PCC 8801 / RF-1) (Cyanothece sp. (strain PCC 8801)).